A 451-amino-acid chain; its full sequence is Penicillin-binding protein 4* (451 aa).

Catalysis depends on S61, which acts as the Acyl-ester intermediate.

It belongs to the beta-lactamase family.

The protein localises to the forespore outer membrane. Its pathway is cell wall biogenesis; peptidoglycan biosynthesis. In terms of biological role, probably involved in peptidoglycan modification during cortex synthesis. This chain is Penicillin-binding protein 4* (pbpE), found in Bacillus subtilis (strain 168).